The sequence spans 444 residues: Zinc finger protein ZIC 1 (444 aa).

The segment at 222–257 (LICKWIEPEQLANPKKSCNKTFSTMHELVTHVTVEH) adopts a C2H2-type 1 zinc-finger fold. Residues 271 to 293 (EECPREGKPFKAKYKLVNHIRVH) form a C2H2-type 2; degenerate zinc finger. 3 consecutive C2H2-type zinc fingers follow at residues 299–323 (FPCPFPGCGKVFARSENLKIHKRTH), 329–353 (FKCEFEGCDRRFANSSDRKKHMHVH), and 359–381 (YLCKMCDKSYTHPSSLRKHMKVH). The tract at residues 372–432 (SSLRKHMKVH…SSAGHHTASH (61 aa)) is disordered. The segment covering 383–432 (SSSQGSQPSPAASSGYESSTPPTIVSPSTENQTASSLSPSSSAGHHTASH) has biased composition (low complexity).

It belongs to the GLI C2H2-type zinc-finger protein family.

Its subcellular location is the nucleus. The protein localises to the cytoplasm. In terms of biological role, acts as a transcriptional activator. Involved in neurogenesis. Plays important roles in the early stage of organogenesis of the CNS, as well as during dorsal spinal cord development and maturation of the cerebellum. Binds to the minimal GLI-consensus sequence 5'-TGGGTGGTC-3'. This Gallus gallus (Chicken) protein is Zinc finger protein ZIC 1 (ZIC1).